The sequence spans 402 residues: Type II NADH:quinone oxidoreductase (402 aa).

FAD is bound by residues 12 to 16, 39 to 40, and valine 83; these read GAGYA and NK. Glutamate 172 is an active-site residue. FAD is bound by residues aspartate 302, 319–320, and lysine 379; that span reads AQ.

Belongs to the NADH dehydrogenase family. FAD is required as a cofactor.

The protein localises to the cell membrane. It carries out the reaction a quinone + NADH + H(+) = a quinol + NAD(+). In terms of biological role, alternative, nonproton pumping NADH:quinone oxidoreductase that delivers electrons to the respiratory chain by oxidation of NADH and reduction of quinones, and contributes to the regeneration of NAD(+). The chain is Type II NADH:quinone oxidoreductase from Staphylococcus aureus (strain MSSA476).